A 326-amino-acid polypeptide reads, in one-letter code: Sucrose operon repressor (326 aa).

The region spanning 1–57 (MKPKLNDVAKLAGVSATTVSRVINNHGYLSSQTKEKVFAAMRELHYQPNNMARSLQG) is the HTH lacI-type domain. A DNA-binding region (H-T-H motif) is located at residues 5–24 (LNDVAKLAGVSATTVSRVIN).

Its function is as follows. Negative regulator of scrB expression. This is Sucrose operon repressor (scrR) from Pediococcus pentosaceus.